The sequence spans 374 residues: All-trans-retinol dehydrogenase [NAD(+)] ADH7 (374 aa).

The Zn(2+) site is built by Cys-47, His-68, Cys-98, Cys-101, Cys-104, Cys-112, and Cys-174. NAD(+)-binding positions include 199-204 (GLGGVG), Asp-223, Lys-228, 292-294 (VGA), and Arg-369.

It belongs to the zinc-containing alcohol dehydrogenase family. Class-IV subfamily. In terms of assembly, homodimer. It depends on Zn(2+) as a cofactor. As to expression, high expression in the stomach mucosa. Lower expression in eye, thymus, skin and ovary. Very low expression in small intestine, liver and uterus.

The protein resides in the cytoplasm. It carries out the reaction a primary alcohol + NAD(+) = an aldehyde + NADH + H(+). The catalysed reaction is 10-hydroxydecanoate + NAD(+) = 10-oxodecanoate + NADH + H(+). The enzyme catalyses all-trans-retinol + NAD(+) = all-trans-retinal + NADH + H(+). It catalyses the reaction 9-cis-retinol + NAD(+) = 9-cis-retinal + NADH + H(+). It carries out the reaction all-trans-3,4-didehydroretinol + NAD(+) = all-trans-3,4-didehydroretinal + NADH + H(+). The catalysed reaction is all-trans-4-hydroxyretinol + NAD(+) = all-trans-4-hydroxyretinal + NADH + H(+). The enzyme catalyses all-trans-4-oxoretinol + NAD(+) = all-trans-4-oxoretinal + NADH + H(+). It catalyses the reaction 12-hydroxydodecanoate + NAD(+) = 12-oxododecanoate + NADH + H(+). It carries out the reaction 16-hydroxyhexadecanoate + NAD(+) = 16-oxohexadecanoate + NADH + H(+). The catalysed reaction is hexan-1-ol + NAD(+) = hexanal + NADH + H(+). The enzyme catalyses (E)-hex-2-en-1-ol + NAD(+) = (E)-hex-2-enal + NADH + H(+). It catalyses the reaction (E)-4-hydroxynon-2-en-1-ol + NAD(+) = (E)-4-hydroxynon-2-enal + NADH + H(+). With respect to regulation, retinol oxidation is inhibited by the detergent Tween 80. Ethanol inhibits both all-trans-retinol and 9-cis-retinol oxidation. 13-cis-retinol is an effective competitive inhibitor of the 9-cis-retinol oxidation. All-trans-retinoic acid is a powerful inhibitor of all-trans-retinol oxidation. 13-cis-retinoic acid is a powerful inhibitor of all-trans-retinol oxidation. Cimetidine competitively inhibited ethanol oxidation. Catalyzes the NAD-dependent oxidation of all-trans-retinol, alcohol, aldehyde and omega-hydroxy fatty acids and their derivatives. Oxidizes preferentially all trans-retinol, all-trans-4-hydroxyretinol, 9-cis-retinol, 2-hexenol, and long chain omega-hydroxy fatty acids such as juniperic acid. In vitro can also catalyze the NADH-dependent reduction of all-trans-retinal and aldehydes and their derivatives. Reduces preferentially all trans-retinal, all-trans-4-oxoretinal and hexanal. Catalyzes in the oxidative direction with higher efficiency. Therefore may participate in retinoid metabolism, fatty acid omega-oxidation, and elimination of cytotoxic aldehydes produced by lipid peroxidation. The protein is All-trans-retinol dehydrogenase [NAD(+)] ADH7 (Adh7) of Mus musculus (Mouse).